The following is a 332-amino-acid chain: Ribosomal RNA small subunit methyltransferase H (332 aa).

S-adenosyl-L-methionine-binding positions include 42-44 (GGH), Asp-62, Phe-86, Asp-105, and Gln-112.

It belongs to the methyltransferase superfamily. RsmH family.

It localises to the cytoplasm. It carries out the reaction cytidine(1402) in 16S rRNA + S-adenosyl-L-methionine = N(4)-methylcytidine(1402) in 16S rRNA + S-adenosyl-L-homocysteine + H(+). Functionally, specifically methylates the N4 position of cytidine in position 1402 (C1402) of 16S rRNA. In Cupriavidus pinatubonensis (strain JMP 134 / LMG 1197) (Cupriavidus necator (strain JMP 134)), this protein is Ribosomal RNA small subunit methyltransferase H.